Reading from the N-terminus, the 692-residue chain is Proprotein convertase subtilisin/kexin type 9 (692 aa).

The signal sequence occupies residues Met1 to Ala30. The propeptide occupies Gln31–Gln152. Sulfotyrosine is present on Tyr38. Ser47 is subject to Phosphoserine. The region spanning Thr77–Val149 is the Inhibitor I9 domain. Residues Pro155–Leu444 form the Peptidase S8 domain. Active-site charge relay system residues include Asp186 and His226. Cystine bridges form between Cys223–Cys255 and Cys323–Cys358. Ser386 functions as the Charge relay system in the catalytic mechanism. The tract at residues Arg450–Gln692 is C-terminal domain. Intrachain disulfides connect Cys457/Cys527, Cys477/Cys526, and Cys486/Cys509. Asn533 carries an N-linked (GlcNAc...) asparagine glycan. Disulfide bonds link Cys534-Cys601, Cys552-Cys600, Cys562-Cys588, Cys608-Cys679, Cys626-Cys678, and Cys635-Cys654. Ser688 is subject to Phosphoserine.

This sequence belongs to the peptidase S8 family. Monomer. Can self-associate to form dimers and higher multimers which may have increased LDLR degrading activity. The precursor protein but not the mature protein may form multimers. Interacts with APOB, VLDLR, LRP8/APOER2 and BACE1. The full-length immature form (pro-PCSK9) interacts with SCNN1A, SCNN1B and SCNN1G. The pro-PCSK9 form (via C-terminal domain) interacts with LDLR. Interacts (via the C-terminal domain) with ANXA2 (via repeat Annexin 1); the interaction inhibits the degradation of LDLR. Ca(2+) is required as a cofactor. In terms of processing, cleavage by furin and PCSK5 generates a truncated inactive protein that is unable to induce LDLR degradation. Post-translationally, undergoes autocatalytic cleavage in the endoplasmic reticulum to release the propeptide from the N-terminus and the cleavage of the propeptide is strictly required for its maturation and activation. The cleaved propeptide however remains associated with the catalytic domain through non-covalent interactions, preventing potential substrates from accessing its active site. As a result, it is secreted from cells as a propeptide-containing, enzymatically inactive protein. Phosphorylation protects the propeptide against proteolysis.

It localises to the cytoplasm. The protein localises to the secreted. It is found in the endosome. The protein resides in the lysosome. Its subcellular location is the cell surface. It localises to the endoplasmic reticulum. The protein localises to the golgi apparatus. Its proteolytic activity is autoinhibited by the non-covalent binding of the propeptide to the catalytic domain. Inhibited by EGTA. Its function is as follows. Crucial player in the regulation of plasma cholesterol homeostasis. Binds to low-density lipid receptor family members: low density lipoprotein receptor (LDLR), very low density lipoprotein receptor (VLDLR), apolipoprotein E receptor (LRP1/APOER) and apolipoprotein receptor 2 (LRP8/APOER2), and promotes their degradation in intracellular acidic compartments. Acts via a non-proteolytic mechanism to enhance the degradation of the hepatic LDLR through a clathrin LDLRAP1/ARH-mediated pathway. May prevent the recycling of LDLR from endosomes to the cell surface or direct it to lysosomes for degradation. Can induce ubiquitination of LDLR leading to its subsequent degradation. Inhibits intracellular degradation of APOB via the autophagosome/lysosome pathway in a LDLR-independent manner. Involved in the disposal of non-acetylated intermediates of BACE1 in the early secretory pathway. Inhibits epithelial Na(+) channel (ENaC)-mediated Na(+) absorption by reducing ENaC surface expression primarily by increasing its proteasomal degradation. Regulates neuronal apoptosis via modulation of LRP8/APOER2 levels and related anti-apoptotic signaling pathways. The chain is Proprotein convertase subtilisin/kexin type 9 (PCSK9) from Colobus guereza (Mantled guereza).